Here is a 163-residue protein sequence, read N- to C-terminus: Nucleotide-binding protein RER_17110 (163 aa).

The protein belongs to the YajQ family.

Nucleotide-binding protein. In Rhodococcus erythropolis (strain PR4 / NBRC 100887), this protein is Nucleotide-binding protein RER_17110.